Here is a 296-residue protein sequence, read N- to C-terminus: Cytidine deaminase (296 aa).

CMP/dCMP-type deaminase domains follow at residues 47–167 (TEAE…FGPK) and 186–296 (DSSD…VDPV). 88 to 90 (NLE) provides a ligand contact to substrate. Histidine 101 contributes to the Zn(2+) binding site. Glutamate 103 (proton donor) is an active-site residue. Cysteine 128 and cysteine 131 together coordinate Zn(2+).

Belongs to the cytidine and deoxycytidylate deaminase family. As to quaternary structure, homodimer. Zn(2+) serves as cofactor.

The catalysed reaction is cytidine + H2O + H(+) = uridine + NH4(+). The enzyme catalyses 2'-deoxycytidine + H2O + H(+) = 2'-deoxyuridine + NH4(+). Its function is as follows. This enzyme scavenges exogenous and endogenous cytidine and 2'-deoxycytidine for UMP synthesis. In Shewanella sp. (strain MR-4), this protein is Cytidine deaminase.